We begin with the raw amino-acid sequence, 154 residues long: Ribosome maturation factor RimP (154 aa).

This sequence belongs to the RimP family.

It is found in the cytoplasm. Functionally, required for maturation of 30S ribosomal subunits. The sequence is that of Ribosome maturation factor RimP from Natranaerobius thermophilus (strain ATCC BAA-1301 / DSM 18059 / JW/NM-WN-LF).